Consider the following 503-residue polypeptide: Cell wall integrity and stress response component 2 (503 aa).

The first 23 residues, 1–23, serve as a signal peptide directing secretion; that stretch reads MHLDLIHKSFILVWLIYIRAALA. Over 24 to 325 the chain is Extracellular; the sequence is DQFTYKACYS…KGLSGGAIAG (302 aa). In terms of domain architecture, WSC spans 25–118; it reads QFTYKACYSA…SSAMNVYINN (94 aa). Residues 124-260 are disordered; the sequence is DSTSSTATST…STPSSTSIGT (137 aa). A helical transmembrane segment spans residues 326 to 346; it reads VVVGVVCGTVALLALALFFFV. The Cytoplasmic segment spans residues 347 to 503; the sequence is WKKRRQSSQH…AKDSNNSSLR (157 aa). Thr402 carries the post-translational modification Phosphothreonine. Phosphoserine is present on residues Ser455 and Ser458. Residues 470–503 are disordered; the sequence is IVNPDNVSSNIGSNVSDGDDDYDDAKDSNNSSLR.

N-glycosylated.

The protein localises to the cell membrane. The chain is Cell wall integrity and stress response component 2 (WSC2) from Saccharomyces cerevisiae (strain ATCC 204508 / S288c) (Baker's yeast).